The chain runs to 180 residues: MSLFTLFALAVALGTDAFSLCIGIGIAGVNRRQIALISLTVLIFHILMPLLGWYAGGFLGSKMGQAASIAGALLLLYLGGKMIWDTIKPGKDEGPRFVITNTGGLLLLSASVSMDALSVGFTLGTQQVSLVLAAGVIGLVAGMMTFAGLTLGKYVGDWIGERAELVGGIILVGIGVKLFF.

Helical transmembrane passes span 6–26, 34–54, 67–87, 103–123, 130–150, and 159–179; these read LFALAVALGTDAFSLCIGIGI, IALISLTVLIFHILMPLLGWY, ASIAGALLLLYLGGKMIWDTI, GGLLLLSASVSMDALSVGFTL, LVLAAGVIGLVAGMMTFAGLT, and IGERAELVGGIILVGIGVKLF.

It belongs to the MntP (TC 9.B.29) family.

The protein resides in the cell membrane. Probably functions as a manganese efflux pump. The protein is Putative manganese efflux pump MntP of Desulforamulus reducens (strain ATCC BAA-1160 / DSM 100696 / MI-1) (Desulfotomaculum reducens).